A 677-amino-acid chain; its full sequence is Platelet glycoprotein Ib alpha chain (677 aa).

Residues 1–16 form the signal peptide; sequence MHLLLWLLLLARLCRP. Residues 17-47 enclose the LRRNT domain; sequence EFICEVSKVTSQVEVNCDNKGLKALPPGLPG. The Extracellular portion of the chain corresponds to 17-564; it reads EFICEVSKVT…NPDLCCLLPL (548 aa). Cys-20 and Cys-33 are oxidised to a cystine. 6 LRR repeats span residues 72–93, 94–115, 117–138, 141–162, 165–186, and 189–210; these read RLAQ…GMLP, RLET…GRAL, ALTT…TLDG, HLHE…LLAP, QLRK…FLEG, and ELDT…FFGD. In terms of domain architecture, LRRCT spans 221–282; that stretch reads NPWSCDCEIL…HTYQGKDCPS (62 aa). 2 disulfides stabilise this stretch: Cys-225–Cys-264 and Cys-227–Cys-280. A sulfotyrosine mark is found at Tyr-291 and Tyr-294. O-linked (GalNAc...) threonine glycosylation is found at Thr-309, Thr-319, Thr-323, Thr-324, Thr-346, Thr-354, Thr-368, Thr-372, Thr-376, Thr-377, and Thr-399. Residues 359–499 are disordered; that stretch reads TLGPIMPTTT…EPTTTPTSPT (141 aa). 4 stretches are compositionally biased toward low complexity: residues 362-385, 393-403, 411-421, and 427-470; these read PIMP…TTPT, PTTLEPTTTPI, and TPST…TPTI. Residues 471–485 show a composition bias toward pro residues; it reads PELPTPPTTPEPTMP. Positions 486 to 499 are enriched in low complexity; that stretch reads PTTLEPTTTPTSPT. Thr-487 carries O-linked (GalNAc...) threonine glycosylation. Ser-497 carries an O-linked (GalNAc...) serine glycan. Thr-500 carries an O-linked (GalNAc...) threonine glycan. A glycan (O-linked (GalNAc...) serine) is linked at Ser-523. Residues 565–585 traverse the membrane as a helical segment; sequence GFYILGLLWLLFASVVLILLL. Topologically, residues 586 to 677 are cytoplasmic; sequence TWAQHVKPQA…VGVRYSSHSL (92 aa). Phosphoserine is present on residues Ser-654 and Ser-657.

As to quaternary structure, two GP-Ib beta are disulfide-linked to one GP-Ib alpha. GP-IX is complexed with the GP-Ib heterodimer via a non covalent linkage. Interacts with FLNB. Interacts with FLNA (via filamin repeats 4, 9, 12, 17, 19, 21, and 23). O-glycosylated. Post-translationally, glycocalicin is the product of a proteolytic cleavage/shedding, catalyzed by ADAM17, which releases most of the extracellular domain. Binding sites for vWF and thrombin are in this part of the protein.

It is found in the membrane. Its function is as follows. GP-Ib, a surface membrane protein of platelets, participates in the formation of platelet plugs by binding to the A1 domain of vWF, which is already bound to the subendothelium. This Canis lupus familiaris (Dog) protein is Platelet glycoprotein Ib alpha chain (GP1BA).